Consider the following 449-residue polypeptide: Glucose-6-phosphate isomerase (449 aa).

Glutamate 291 serves as the catalytic Proton donor. Catalysis depends on residues histidine 312 and lysine 426.

This sequence belongs to the GPI family.

Its subcellular location is the cytoplasm. It carries out the reaction alpha-D-glucose 6-phosphate = beta-D-fructose 6-phosphate. It participates in carbohydrate biosynthesis; gluconeogenesis. It functions in the pathway carbohydrate degradation; glycolysis; D-glyceraldehyde 3-phosphate and glycerone phosphate from D-glucose: step 2/4. Catalyzes the reversible isomerization of glucose-6-phosphate to fructose-6-phosphate. The protein is Glucose-6-phosphate isomerase of Streptococcus pyogenes serotype M1.